The chain runs to 383 residues: Acetylornithine deacetylase (383 aa).

His80 is a binding site for Zn(2+). The active site involves Asp82. Position 112 (Asp112) interacts with Zn(2+). The active site involves Glu144. Residues Glu145, Glu169, and His355 each coordinate Zn(2+).

Belongs to the peptidase M20A family. ArgE subfamily. As to quaternary structure, homodimer. The cofactor is Zn(2+). Co(2+) is required as a cofactor. Requires glutathione as cofactor.

It localises to the cytoplasm. It catalyses the reaction N(2)-acetyl-L-ornithine + H2O = L-ornithine + acetate. Its pathway is amino-acid biosynthesis; L-arginine biosynthesis; L-ornithine from N(2)-acetyl-L-ornithine (linear): step 1/1. Functionally, catalyzes the hydrolysis of the amide bond of N(2)-acetylated L-amino acids. Cleaves the acetyl group from N-acetyl-L-ornithine to form L-ornithine, an intermediate in L-arginine biosynthesis pathway, and a branchpoint in the synthesis of polyamines. The protein is Acetylornithine deacetylase of Salmonella typhimurium (strain LT2 / SGSC1412 / ATCC 700720).